A 228-amino-acid polypeptide reads, in one-letter code: L-ribulose-5-phosphate 4-epimerase UlaF (228 aa).

Residues 26 to 27, 43 to 44, and 72 to 73 each bind substrate; these read GN, SG, and SS. Residues Asp74, His93, and His95 each coordinate Zn(2+). Asp118 (proton donor/acceptor) is an active-site residue. His167 serves as a coordination point for Zn(2+). Tyr225 acts as the Proton donor/acceptor in catalysis.

This sequence belongs to the aldolase class II family. AraD/FucA subfamily. It depends on Zn(2+) as a cofactor.

The catalysed reaction is L-ribulose 5-phosphate = D-xylulose 5-phosphate. It participates in cofactor degradation; L-ascorbate degradation; D-xylulose 5-phosphate from L-ascorbate: step 4/4. In terms of biological role, catalyzes the isomerization of L-ribulose 5-phosphate to D-xylulose 5-phosphate. Is involved in the anaerobic L-ascorbate utilization. The chain is L-ribulose-5-phosphate 4-epimerase UlaF from Escherichia coli O7:K1 (strain IAI39 / ExPEC).